The following is a 516-amino-acid chain: Nucleolar complex protein 4 homolog (516 aa).

3 helical membrane-spanning segments follow: residues 297 to 317 (ACDLGGALSLLALNGLFILIH), 347 to 367 (FFHLADLFLSSSHLPAYLVAA), and 375 to 395 (LALTAPPEALLMVLPFICNLL).

It belongs to the CBF/MAK21 family.

The protein resides in the nucleus membrane. Its subcellular location is the nucleus. It is found in the nucleolus. This Homo sapiens (Human) protein is Nucleolar complex protein 4 homolog (NOC4L).